Here is a 360-residue protein sequence, read N- to C-terminus: UDP-N-acetylglucosamine--N-acetylmuramyl-(pentapeptide) pyrophosphoryl-undecaprenol N-acetylglucosamine transferase (360 aa).

Serine 198 and glutamine 289 together coordinate UDP-N-acetyl-alpha-D-glucosamine.

It belongs to the glycosyltransferase 28 family. MurG subfamily.

The protein resides in the cell membrane. The catalysed reaction is Mur2Ac(oyl-L-Ala-gamma-D-Glu-L-Lys-D-Ala-D-Ala)-di-trans,octa-cis-undecaprenyl diphosphate + UDP-N-acetyl-alpha-D-glucosamine = beta-D-GlcNAc-(1-&gt;4)-Mur2Ac(oyl-L-Ala-gamma-D-Glu-L-Lys-D-Ala-D-Ala)-di-trans,octa-cis-undecaprenyl diphosphate + UDP + H(+). Its pathway is cell wall biogenesis; peptidoglycan biosynthesis. Its function is as follows. Cell wall formation. Catalyzes the transfer of a GlcNAc subunit on undecaprenyl-pyrophosphoryl-MurNAc-pentapeptide (lipid intermediate I) to form undecaprenyl-pyrophosphoryl-MurNAc-(pentapeptide)GlcNAc (lipid intermediate II). This is UDP-N-acetylglucosamine--N-acetylmuramyl-(pentapeptide) pyrophosphoryl-undecaprenol N-acetylglucosamine transferase from Streptococcus pyogenes serotype M3 (strain SSI-1).